The chain runs to 670 residues: UvrABC system protein B (670 aa).

Residues 51–433 form the Helicase ATP-binding domain; the sequence is EGLKKREQFQ…SARIVEQIIR (383 aa). Position 64–71 (64–71) interacts with ATP; that stretch reads GVTGSGKT. Residues 117–140 carry the Beta-hairpin motif; that stretch reads YYDYYQPESYLPAKDQYIEKDAQI. The 160-residue stretch at 453-612 folds into the Helicase C-terminal domain; sequence DVMQEIRKIV…IVPKTIRKPI (160 aa). The 36-residue stretch at 631–666 folds into the UVR domain; the sequence is PNVIIELDAEMREAADRLDFERAIQLRELIKKLEKE.

This sequence belongs to the UvrB family. In terms of assembly, forms a heterotetramer with UvrA during the search for lesions. Interacts with UvrC in an incision complex.

Its subcellular location is the cytoplasm. In terms of biological role, the UvrABC repair system catalyzes the recognition and processing of DNA lesions. A damage recognition complex composed of 2 UvrA and 2 UvrB subunits scans DNA for abnormalities. Upon binding of the UvrA(2)B(2) complex to a putative damaged site, the DNA wraps around one UvrB monomer. DNA wrap is dependent on ATP binding by UvrB and probably causes local melting of the DNA helix, facilitating insertion of UvrB beta-hairpin between the DNA strands. Then UvrB probes one DNA strand for the presence of a lesion. If a lesion is found the UvrA subunits dissociate and the UvrB-DNA preincision complex is formed. This complex is subsequently bound by UvrC and the second UvrB is released. If no lesion is found, the DNA wraps around the other UvrB subunit that will check the other stand for damage. The polypeptide is UvrABC system protein B (Methanosarcina acetivorans (strain ATCC 35395 / DSM 2834 / JCM 12185 / C2A)).